The primary structure comprises 106 residues: uncharacterized protein (106 aa).

It belongs to the csb family.

This is an uncharacterized protein from Dictyostelium discoideum (Social amoeba).